A 97-amino-acid chain; its full sequence is Secreted LysM effector Mg1LysM (97 aa).

Residues 1-18 (MQFTALVAALLSVAAVQA) form the signal peptide. One can recognise a LysM domain in the interval 37-84 (QQYVARSGDTLTKIAQEIYHDVVGVCDIARANNLADPNRIDAGTPYTI). Chitin-binding residues include Gly44, Thr48, Asn74, and Ile76.

It belongs to the secreted LysM effector family. As to quaternary structure, forms homodimers in a chitin-independent manner through interactions at the N-termini of Mg1LysM monomers. Homodimers are further polymerized in a chitin-dependent manner.

The protein resides in the secreted. It localises to the cell wall. In terms of biological role, secreted effector that enables the plant pathogenic fungus to manipulate host defenses for successful infection. Binds chitin but not cellulose or xylan. Chitin-induced polymerization of homodimers forms a contiguous Mg1LysM highly oligomeric super-complexe that is anchored to the chitin in the fungal cell wall to prevent hydrolysis by host chitinases. The protein is Secreted LysM effector Mg1LysM of Zymoseptoria tritici (strain ST99CH_3D7).